A 534-amino-acid polypeptide reads, in one-letter code: UDP-glucuronosyltransferase 1A4 (534 aa).

Residues 1-28 form the signal peptide; sequence MARGLQVPLPRLATGLLLLLSVQPWAES. Asparagine 119, asparagine 142, asparagine 296, and asparagine 348 each carry an N-linked (GlcNAc...) asparagine glycan. A helical transmembrane segment spans residues 492-508; sequence VIGFLLAVVLTVAFITF.

Belongs to the UDP-glycosyltransferase family. As to quaternary structure, homodimer. Homooligomer. Interacts with UGT1A1, UGT1A3, UGT1A6, UGT1A7, UGT1A8, UGT1A9 and UGT1A10 to form heterodimers. Isoform 1 interacts with isoform 2/i2 suggesting that oligomerization is involved in negative regulation of transferase activity by isoform 2. Isoform 1 also interacts with respective i2 isoforms of UGT1A1, UGT1A3, UGT1A6, UGT1A7, UGT1A8, UGT1A9 and UGT1A10. As to expression, expressed in liver. Expressed in kidney, colon and small intestine. Not expressed in esophagus. Not expressed in skin. In terms of tissue distribution, expressed in liver, kidney, colon, esophagus and small intestine.

Its subcellular location is the endoplasmic reticulum membrane. The enzyme catalyses glucuronate acceptor + UDP-alpha-D-glucuronate = acceptor beta-D-glucuronoside + UDP + H(+). The catalysed reaction is calcidiol + UDP-alpha-D-glucuronate = calcidiol 25-O-(beta-D-glucuronide) + UDP + H(+). It catalyses the reaction calcidiol + UDP-alpha-D-glucuronate = calcidiol 3-O-(beta-D-glucuronide) + UDP + H(+). It carries out the reaction calcitriol + UDP-alpha-D-glucuronate = calcitriol 25-O-(beta-D-glucuronide) + UDP + H(+). The enzyme catalyses (5Z,8Z,11Z,14Z)-eicosatetraenoate + UDP-alpha-D-glucuronate = O-[(5Z),(8Z),(11Z),(14Z)-eicosatetraenoyl]-beta-D-glucuronate + UDP. The catalysed reaction is 15-hydroxy-(5Z,8Z,11Z,13E)-eicosatetraenoate + UDP-alpha-D-glucuronate = 15-O-(beta-D-glucuronosyl)-(5Z,8Z,11Z,14Z)-eicosatetraenoate + UDP + H(+). It catalyses the reaction 20-hydroxy-(5Z,8Z,11Z,14Z)-eicosatetraenoate + UDP-alpha-D-glucuronate = 20-O-(beta-D-glucuronosyl)-(5Z,8Z,11Z,14Z)-eicosatetraenoate + UDP + H(+). Functionally, UDP-glucuronosyltransferase (UGT) that catalyzes phase II biotransformation reactions in which lipophilic substrates are conjugated with glucuronic acid to increase the metabolite's water solubility, thereby facilitating excretion into either the urine or bile. Essential for the elimination and detoxification of drugs, xenobiotics and endogenous compounds. Involved in the glucuronidation of calcidiol, which is the major circulating form of vitamin D3 essential for the regulation of calcium and phosphate homeostasis. Also glucuronidates the biologically active form of vitamin D3, calcitriol, probably leading to its biliary transport and intestinal reabsorption. Involved in the glucuronidation of arachidonic acid (AA) and AA-derived eicosanoids including 15-HETE, 20-HETE and PGB1. Its function is as follows. Lacks UDP-glucuronosyltransferase (UGT) activity but acts as a negative regulator of isoform 1. In Homo sapiens (Human), this protein is UDP-glucuronosyltransferase 1A4.